Reading from the N-terminus, the 287-residue chain is ATP synthase subunit a (287 aa).

Helical transmembrane passes span 37-57 (LDSVAVSVILGVLGLFVMWLA), 96-116 (FIAPLALTVFVWIFLMNAMDL), 144-164 (DLSTTLGLSSAVLILCFVYSI), 187-207 (PVFALILGVVNLLMQIIEYVA), 224-244 (ELVFMLIALMGGAAAMSLSGV), and 266-286 (TLQAFIFMMLTLIYLGQAHEA).

Belongs to the ATPase A chain family. In terms of assembly, F-type ATPases have 2 components, CF(1) - the catalytic core - and CF(0) - the membrane proton channel. CF(1) has five subunits: alpha(3), beta(3), gamma(1), delta(1), epsilon(1). CF(0) has three main subunits: a(1), b(2) and c(9-12). The alpha and beta chains form an alternating ring which encloses part of the gamma chain. CF(1) is attached to CF(0) by a central stalk formed by the gamma and epsilon chains, while a peripheral stalk is formed by the delta and b chains.

It localises to the cell inner membrane. Its function is as follows. Key component of the proton channel; it plays a direct role in the translocation of protons across the membrane. This Acidovorax ebreus (strain TPSY) (Diaphorobacter sp. (strain TPSY)) protein is ATP synthase subunit a.